The following is a 443-amino-acid chain: MARIPLEFLSITLPVLLLAYCLAIEYEVSLPTIAHTSPASNPEEYLQSIYEQLNLDLPSTCTVNHLSAFDNTPTSLLNFSTSPVEHFDAPKLPSGLNATAGEQWAFDGTSSSGRSGLLLGIYRDASYAFLGPGNFRLSLDLVWDNSTTWSTVDYLSSSTVHTCTDKVVGIWSHSADHYYVFTVTADAKHARIHFHTPDVVGAVDLYSTTPARYPDGALFPSEVSVTQNAPMLHWVEPIPGGLIDVDLKVKDTPFRWTGLGGHERWWSAKGWLDLMTHWEAVRLMAGPYVLSFWQPTSRVNGVAYPSAFLTKYGEKVFSAVSGKVSEVEDYILYRPVRMEKQARETGYEVDLVSPAQGRRWVFGLEYRNQEFEFELGDAAGGRAYVGRAKGGEVHADDKPEEPSEGVFFIEHVDVKALTVPRAYVVVSFEFGPPIHGADIWVAC.

The signal sequence occupies residues 1–23 (MARIPLEFLSITLPVLLLAYCLA). 3 N-linked (GlcNAc...) asparagine glycosylation sites follow: asparagine 78, asparagine 97, and asparagine 145.

Belongs to the Diels-Alderase family.

It functions in the pathway secondary metabolite biosynthesis. Functionally, diels-Alderase; part of the gene cluster that mediates the biosynthesis of oxaleimides, cytotoxic compounds containing an unusual disubstituted succinimide moiety. The first step of the pathway is provided by the HR-PKS poxF that serves in a new mode of collaborative biosynthesis with the PKS-NRPS poxE, by providing the olefin containing amino acid substrate via the synthesis of an ACP-bound dec-4-enoate. The cytochrome P450 monooxygenase poxM-catalyzed oxidation at the alpha-position creates the enzyme-bound 2-hydroxydec-4-enoyl-ACP thioester, which may be prone to spontaneous hydrolysis to yield 2-hydroxydec-4-enoic acid due to increased electrophilicity of the carbonyl. 2-hydroxydec-4-enoic acid can then be further oxidized by poxM to yield the alpha-ketoacid 2-oxodec-4-enoicacid, which is reductively aminated by the aminotransferase poxL to yield (S,E)-2-aminodec-4-enoic acid. The Hybrid PKS-NRPS synthetase poxE then performs condensation between the octaketide product of its PKS modules and the amino group of (S,E)-2-aminodec-4-enoic acid which is activated and incorporated by the adenylation domain. The resulting aminoacyl product can be cyclized by the Diels-Alderase PoxQ and reductively released by the reductive (R) domain of poxE to yield an aldehyde intermediate. The released aldehyde is then substrate for a Knoevenagel condensation by the hydrolyase poxO followed by an oxidation at the 5-position of the pyrrolidone ring. The presence of the olefin from the amino acid building block allows for migration of the substituted allyl group to occur. This allylic transposition reaction takes place in a conjugate addition, semipinacol-like fashion to yield a succinimide intermediate. Iterative two-electron oxidations of the C7 methyl of the succinimide intermediate to the carboxylic acid can be catalyzed by one of two remaining cytochrome P450 monooxygenasess poxC or poxD to yield oxaleimide A. Subsequent oxidation yields the maleimide scaffold oxaleimide I. Both oxaleimide A and oxaleimide I can undergo oxidative modifications in the decalin ring to yield the series of products oxaleimides B to H. In Penicillium oxalicum, this protein is Diels-Alderase poxQ.